Consider the following 238-residue polypeptide: Uridylate kinase (238 aa).

12-15 provides a ligand contact to ATP; the sequence is KLSG. Glycine 54 is a binding site for UMP. 2 residues coordinate ATP: glycine 55 and arginine 59. UMP is bound by residues aspartate 74 and 135 to 142; that span reads VGAPYFTT. Residues threonine 162, tyrosine 168, and aspartate 171 each coordinate ATP.

Belongs to the UMP kinase family. Homohexamer.

It is found in the cytoplasm. The enzyme catalyses UMP + ATP = UDP + ADP. It functions in the pathway pyrimidine metabolism; CTP biosynthesis via de novo pathway; UDP from UMP (UMPK route): step 1/1. Inhibited by UTP. Its function is as follows. Catalyzes the reversible phosphorylation of UMP to UDP. The protein is Uridylate kinase of Erythrobacter litoralis (strain HTCC2594).